A 449-amino-acid chain; its full sequence is Phosphoglucosamine mutase (449 aa).

S103 functions as the Phosphoserine intermediate in the catalytic mechanism. Residues S103, D240, D242, and D244 each contribute to the Mg(2+) site. The residue at position 103 (S103) is a Phosphoserine.

It belongs to the phosphohexose mutase family. Requires Mg(2+) as cofactor. In terms of processing, activated by phosphorylation.

The catalysed reaction is alpha-D-glucosamine 1-phosphate = D-glucosamine 6-phosphate. Functionally, catalyzes the conversion of glucosamine-6-phosphate to glucosamine-1-phosphate. The chain is Phosphoglucosamine mutase from Thermobifida fusca (strain YX).